A 379-amino-acid chain; its full sequence is MNNTEYYERLGVDKNASQDEIKKAYRKMSKKYHPDLNKEEGAEDKYKEVQEAYETLSDEQKRAAYDQYGEAGANGGFGGGGFGGASGFSGFGGASGGFGGFEDIFSSFFGGGGAQVNPNAPRQGDDLQYRINLKFEEAIFGVEKQVKYNREELCHTCDGSGAKAGTHPETCHKCGGRGQINVVRDTPLGRMQTQTTCDVCHGTGKEIKEKCTTCHGSGHEKVAHTVKVTVPAGVETGQKMRLQGQGDAGVNGGPYGDLYVVFQVEASDKFERDGAEIYYKMPMDFVQAALGDEVEVPTVHGNVKLKIPAGTQTGANFRLKGKGAPKLRGSGNGDQYVIINIVTPKNMNQAQKEALQAFAKASGIEVSGSGKKGFFDKFK.

Positions 5 to 69 (EYYERLGVDK…QKRAAYDQYG (65 aa)) constitute a J domain. Residues 141–223 (GVEKQVKYNR…CHGSGHEKVA (83 aa)) form a CR-type zinc finger. Zn(2+)-binding residues include C154, C157, C171, C174, C197, C200, C211, and C214. CXXCXGXG motif repeat units lie at residues 154 to 161 (CHTCDGSG), 171 to 178 (CHKCGGRG), 197 to 204 (CDVCHGTG), and 211 to 218 (CTTCHGSG).

Belongs to the DnaJ family. As to quaternary structure, homodimer. The cofactor is Zn(2+).

The protein resides in the cytoplasm. Participates actively in the response to hyperosmotic and heat shock by preventing the aggregation of stress-denatured proteins and by disaggregating proteins, also in an autonomous, DnaK-independent fashion. Unfolded proteins bind initially to DnaJ; upon interaction with the DnaJ-bound protein, DnaK hydrolyzes its bound ATP, resulting in the formation of a stable complex. GrpE releases ADP from DnaK; ATP binding to DnaK triggers the release of the substrate protein, thus completing the reaction cycle. Several rounds of ATP-dependent interactions between DnaJ, DnaK and GrpE are required for fully efficient folding. Also involved, together with DnaK and GrpE, in the DNA replication of plasmids through activation of initiation proteins. This chain is Chaperone protein DnaJ, found in Lactococcus lactis subsp. cremoris (strain SK11).